We begin with the raw amino-acid sequence, 136 residues long: Large ribosomal subunit protein eL27 (136 aa).

A KOW domain is found at 5 to 40; sequence MKPGKVVLVLAGRYSGRKAVIVKNIDDGTSDRPYSH. An N6-acetyllysine mark is found at lysine 27 and lysine 93.

Belongs to the eukaryotic ribosomal protein eL27 family. Component of the large ribosomal subunit. Interacts with RRP1B. Component of the large ribosomal subunit. Interacts with RRP1B. Interacts with DHX33.

The protein localises to the cytoplasm. Its subcellular location is the cytosol. The protein resides in the rough endoplasmic reticulum. In terms of biological role, component of the large ribosomal subunit. Required for proper rRNA processing and maturation of 28S and 5.8S rRNAs. This Bos taurus (Bovine) protein is Large ribosomal subunit protein eL27 (RPL27).